Consider the following 517-residue polypeptide: MEELQLQGYLEKDGSRQQNFLYPLIFQEYIYTLAHDHGLNSSIFDEPMEIVGLGYDNKSSSVLVKRLITRMYQQNSLIYSMNDFNQNRFVGHNNSFYSNFDSKMVSEGFAVIVEIPFSLRLVPSSEEIPKSQNLRSIHSIFPFLEDKLSYLNYVLDILIPYPIHLEILVQILQCWIQDVPSLHFLRLFLHEFHNWNNLITPTKSISVFSKENKRLFRILYNSYVSEYEFVFVFLRKQSYYLRSTSSRAFLERTHFYVKIEHLIDVCHNHFQKILWFFKDSFMHYVRYKGKAILASRGTYLLIKKWKCYLVNFWQYHFHFWSKPYRIHINPFSNYSFYFLGYISSVRINPSAVKNQMLENFYLVDTLTQKFDTIVPVIPLIGSLSKAKFCTILGHPISKPIWAELSDSDIIDRFGRICRNLSHYHSGSSKKQSLYRIKYILRLSCARTLARKHKSTVRNLLQRLGSGLLEEFFTEEEQVISPIFPKTTLFPLHGSHKERIWYLNIIRINDLANYLDWS.

Belongs to the intron maturase 2 family. MatK subfamily.

The protein resides in the plastid. It localises to the chloroplast. In terms of biological role, usually encoded in the trnK tRNA gene intron. Probably assists in splicing its own and other chloroplast group II introns. This chain is Maturase K, found in Trillium grandiflorum (Large-flowered trillium).